The primary structure comprises 27 residues: uncharacterized protein (27 aa).

It is found in the plastid. The protein localises to the chloroplast. This is an uncharacterized protein from Anthoceros angustus (Hornwort).